The following is a 386-amino-acid chain: Benzoyl-CoA reductase subunit C (386 aa).

The protein belongs to the FldB/FldC dehydratase alpha/beta subunit family. In terms of assembly, heterotetramer composed of A, B, C, and D subunits. It depends on iron-sulfur cluster as a cofactor. Requires an oxidized flavin as cofactor.

The enzyme catalyses cyclohexa-1,5-diene-1-carbonyl-CoA + oxidized 2[4Fe-4S]-[ferredoxin] + 2 ADP + 2 phosphate = reduced 2[4Fe-4S]-[ferredoxin] + benzoyl-CoA + 2 ATP + 2 H2O. It catalyses the reaction 3-hydroxybenzoyl-CoA + AH2 + 2 ATP + 2 H2O = 3-hydroxycyclohexa-1,5-diene-1-carbonyl-CoA + A + 2 ADP + 2 phosphate + 2 H(+). In terms of biological role, catalyzes the anaerobic reduction of benzoyl-CoA and 3-hydroxybenzoyl-CoA to form cyclohexa-1,5-diene-1-carbonyl-CoA and 3-hydroxycyclohexa-1,5-diene-1-carbonyl-CoA, respectively. The enzyme also reduces other benzoyl-CoA analogs with small substituents at the aromatic ring. This Thauera aromatica protein is Benzoyl-CoA reductase subunit C (bcrC).